The following is a 773-amino-acid chain: MAEAHQAVAFQFTVTPDGIDLRLSHEALKQICLSGLHSWKKKFIRFKNGIITGVFPANPSSWLIVVVGVISSMHAKVDPSLGMIAKISRTLDTTGRMSSQTKNIVSGVLFGTGLWVAVIMTMRYSLKVLLSYHGWMFAEHGKMSRSTKIWMAMVKVLSGRKPMLYSFQTSLPRLPVPAVKDTVSRYLESVRPLMKEEDFQRMTALAQDFAVNLGPKLQWYLKLKSWWATNYVSDWWEEYIYLRGRGPLMVNSNYYAMEMLYITPTHIQAARAGNTIHAILLYRRTLDREELKPIRLLGSTIPLCSAQWERLFNTSRIPGEETDTIQHIKDSRHIVVYHRGRYFKVWLYHDGRLLRPRELEQQMQQILDDPSEPQPGEAKLAALTAADRVPWAKCRQTYFARGKNKQSLDAVEKAAFFVTLDESEQGYREEDPEASIDSYAKSLLHGRCFDRWFDKSITFVVFKNSKIGINAEHSWADAPVVGHLWEYVMATDVFQLGYSEDGHCKGDTNPNIPKPTRLQWDIPGECQEVIDASLSSASLLANDVDLHSFPFDSFGKGLIKKCRTSPDAFIQLALQLAHYKDMGKFCLTYEASMTRLFREGRTETVRSCTMESCNFVQAMMDPKSTAEQRLKLFKIACEKHQHLYRLAMTGAGIDRHLFCLYVVSKYLAVDSPFLKEVLSEPWRLSTSQTPQQQVELFDFEKNPDYVSCGGGFGPVADDGYGVSYIIVGENFIHFHISSKFSSPETDSHRFGKHLRQAMMDIITLFGLTINSKK.

Alanine 2 is modified (N-acetylalanine). The Cytoplasmic segment spans residues 2-47 (AEAHQAVAFQFTVTPDGIDLRLSHEALKQICLSGLHSWKKKFIRFK). A helical transmembrane segment spans residues 48 to 73 (NGIITGVFPANPSSWLIVVVGVISSM). Residues 74 to 102 (HAKVDPSLGMIAKISRTLDTTGRMSSQTK) are Mitochondrial intermembrane-facing. The helical transmembrane segment at 103 to 122 (NIVSGVLFGTGLWVAVIMTM) threads the bilayer. Residues 123–773 (RYSLKVLLSY…LFGLTINSKK (651 aa)) lie on the Cytoplasmic side of the membrane. Tyrosine 282 is subject to 3'-nitrotyrosine. The Proton acceptor role is filled by histidine 473. 555-567 (GKGLIKKCRTSPD) provides a ligand contact to CoA. Threonine 588 bears the Phosphothreonine mark. A 3'-nitrotyrosine modification is found at tyrosine 589. Positions 589 and 602 each coordinate (R)-carnitine. Threonine 604 is subject to Phosphothreonine. Phosphoserine occurs at positions 741 and 747.

The protein belongs to the carnitine/choline acetyltransferase family. Homohexamer and homotrimer. Identified in a complex that contains at least CPT1A, ACSL1 and VDAC1. Also identified in complexes with ACSL1 and VDAC2 and VDAC3. Interacts with ZDHHC4. Liver and kidney.

The protein localises to the mitochondrion outer membrane. It carries out the reaction (R)-carnitine + hexadecanoyl-CoA = O-hexadecanoyl-(R)-carnitine + CoA. It catalyses the reaction succinyl-CoA + L-lysyl-[protein] = N(6)-succinyl-L-lysyl-[protein] + CoA + H(+). The protein operates within lipid metabolism; fatty acid beta-oxidation. With respect to regulation, inhibited by malonyl-CoA. Catalyzes the transfer of the acyl group of long-chain fatty acid-CoA conjugates onto carnitine, an essential step for the mitochondrial uptake of long-chain fatty acids and their subsequent beta-oxidation in the mitochondrion. Also possesses a lysine succinyltransferase activity that can regulate enzymatic activity of substrate proteins such as ENO1 and metabolism independent of its classical carnitine O-palmitoyltransferase activity. Plays an important role in hepatic triglyceride metabolism. Also plays a role in inducible regulatory T-cell (iTreg) differentiation once activated by butyryl-CoA that antagonizes malonyl-CoA-mediated CPT1A repression. Sustains the IFN-I response by recruiting ZDHCC4 to palmitoylate MAVS at the mitochondria leading to MAVS stabilization and activation. This chain is Carnitine O-palmitoyltransferase 1, liver isoform (Cpt1a), found in Rattus norvegicus (Rat).